A 314-amino-acid polypeptide reads, in one-letter code: tRNA pseudouridine synthase B (314 aa).

Residue His43 participates in substrate binding. Residue Asp48 is the Nucleophile of the active site. The substrate site is built by Tyr76, Tyr179, and Leu200.

The protein belongs to the pseudouridine synthase TruB family. Type 1 subfamily.

The catalysed reaction is uridine(55) in tRNA = pseudouridine(55) in tRNA. In terms of biological role, responsible for synthesis of pseudouridine from uracil-55 in the psi GC loop of transfer RNAs. The sequence is that of tRNA pseudouridine synthase B from Serratia proteamaculans (strain 568).